We begin with the raw amino-acid sequence, 252 residues long: Glucosamine-6-phosphate deaminase (252 aa).

Catalysis depends on Asp-64, which acts as the Proton acceptor; for enolization step. The active-site For ring-opening step is the Asn-130. Residue His-132 is the Proton acceptor; for ring-opening step of the active site. Residue Glu-137 is the For ring-opening step of the active site.

It belongs to the glucosamine/galactosamine-6-phosphate isomerase family. NagB subfamily.

The enzyme catalyses alpha-D-glucosamine 6-phosphate + H2O = beta-D-fructose 6-phosphate + NH4(+). Its pathway is amino-sugar metabolism; N-acetylneuraminate degradation; D-fructose 6-phosphate from N-acetylneuraminate: step 5/5. Catalyzes the reversible isomerization-deamination of glucosamine 6-phosphate (GlcN6P) to form fructose 6-phosphate (Fru6P) and ammonium ion. The chain is Glucosamine-6-phosphate deaminase from Exiguobacterium sibiricum (strain DSM 17290 / CCUG 55495 / CIP 109462 / JCM 13490 / 255-15).